Consider the following 435-residue polypeptide: ATP-dependent protease ATPase subunit HslU (435 aa).

ATP is bound by residues Ile18, 60–65 (GVGKTE), Asp248, Glu313, and Arg385.

The protein belongs to the ClpX chaperone family. HslU subfamily. In terms of assembly, a double ring-shaped homohexamer of HslV is capped on each side by a ring-shaped HslU homohexamer. The assembly of the HslU/HslV complex is dependent on binding of ATP.

Its subcellular location is the cytoplasm. Its function is as follows. ATPase subunit of a proteasome-like degradation complex; this subunit has chaperone activity. The binding of ATP and its subsequent hydrolysis by HslU are essential for unfolding of protein substrates subsequently hydrolyzed by HslV. HslU recognizes the N-terminal part of its protein substrates and unfolds these before they are guided to HslV for hydrolysis. This Rhizobium leguminosarum bv. trifolii (strain WSM2304) protein is ATP-dependent protease ATPase subunit HslU.